We begin with the raw amino-acid sequence, 375 residues long: Phosphate acyltransferase (375 aa).

The interval 354–375 is disordered; it reads AQDDATSADADAPGDSETGSTN. Over residues 356 to 368 the composition is skewed to low complexity; that stretch reads DDATSADADAPGD.

The protein belongs to the PlsX family. Homodimer. Probably interacts with PlsY.

It is found in the cytoplasm. The catalysed reaction is a fatty acyl-[ACP] + phosphate = an acyl phosphate + holo-[ACP]. Its pathway is lipid metabolism; phospholipid metabolism. Functionally, catalyzes the reversible formation of acyl-phosphate (acyl-PO(4)) from acyl-[acyl-carrier-protein] (acyl-ACP). This enzyme utilizes acyl-ACP as fatty acyl donor, but not acyl-CoA. The sequence is that of Phosphate acyltransferase from Ruegeria sp. (strain TM1040) (Silicibacter sp.).